Here is an 811-residue protein sequence, read N- to C-terminus: Probable potassium transporter 16 (811 aa).

Residues Met-1–Arg-66 lie on the Cytoplasmic side of the membrane. A helical transmembrane segment spans residues Leu-67 to Tyr-87. Residues Gln-88–Asp-100 are Extracellular-facing. A helical membrane pass occupies residues Ile-101 to Val-121. Topologically, residues Phe-122 to Lys-190 are cytoplasmic. Residues Ile-191–Asn-211 traverse the membrane as a helical segment. Topologically, residues Pro-212–Pro-228 are extracellular. The chain crosses the membrane as a helical span at residues His-229–Val-249. Residues Gln-250–Lys-256 lie on the Cytoplasmic side of the membrane. Residues Ile-257–Ile-277 form a helical membrane-spanning segment. At Tyr-278–Gln-310 the chain is on the extracellular side. The chain crosses the membrane as a helical span at residues Leu-311 to Phe-331. Over Ser-332 to Gln-337 the chain is Cytoplasmic. Residues Leu-338 to Tyr-358 traverse the membrane as a helical segment. The Extracellular segment spans residues Leu-359–Pro-379. A helical transmembrane segment spans residues Leu-380–Val-400. At Ser-401–Asn-438 the chain is on the cytoplasmic side. The chain crosses the membrane as a helical span at residues Phe-439 to Val-459. At Lys-460 to Glu-463 the chain is on the extracellular side. Residues Ile-464–Val-484 traverse the membrane as a helical segment. Over Trp-485–Asn-488 the chain is Cytoplasmic. The helical transmembrane segment at Ile-489–Ala-509 threads the bilayer. Residues Val-510–Tyr-519 are Extracellular-facing. A helical transmembrane segment spans residues Met-520 to Val-540. Residues Lys-541–Ile-811 lie on the Cytoplasmic side of the membrane.

The protein belongs to the HAK/KUP transporter (TC 2.A.72.3) family.

It is found in the membrane. In terms of biological role, high-affinity potassium transporter. In Oryza sativa subsp. japonica (Rice), this protein is Probable potassium transporter 16 (HAK16).